A 774-amino-acid polypeptide reads, in one-letter code: Effector protein hopW1-1 (774 aa).

Disordered stretches follow at residues 1–33 (MSPA…QSPQ) and 301–340 (CQAG…VPGQ). Residues 9–23 (TPHSFPPSFTGTSSS) are compositionally biased toward low complexity. The segment covering 24 to 33 (AENSHAQSPQ) has biased composition (polar residues).

Belongs to the HopW family. As to quaternary structure, interacts (via C-terminus) with Arabidopsis WIN1, WIN2 and WIN3.

Its subcellular location is the secreted. Functionally, induces hypersensitive response (HR). This Pseudomonas syringae pv. maculicola protein is Effector protein hopW1-1 (hopW1-1).